Here is a 154-residue protein sequence, read N- to C-terminus: Peptide deformylase (154 aa).

The Fe cation site is built by C90 and H132. E133 is a catalytic residue. H136 contacts Fe cation.

This sequence belongs to the polypeptide deformylase family. Requires Fe(2+) as cofactor.

It catalyses the reaction N-terminal N-formyl-L-methionyl-[peptide] + H2O = N-terminal L-methionyl-[peptide] + formate. Functionally, removes the formyl group from the N-terminal Met of newly synthesized proteins. Requires at least a dipeptide for an efficient rate of reaction. N-terminal L-methionine is a prerequisite for activity but the enzyme has broad specificity at other positions. The protein is Peptide deformylase of Desulforudis audaxviator (strain MP104C).